A 298-amino-acid polypeptide reads, in one-letter code: Bifunctional protein FolD (298 aa).

NADP(+) contacts are provided by residues 165-167 (GRG), S194, and I235.

This sequence belongs to the tetrahydrofolate dehydrogenase/cyclohydrolase family. As to quaternary structure, homodimer.

It carries out the reaction (6R)-5,10-methylene-5,6,7,8-tetrahydrofolate + NADP(+) = (6R)-5,10-methenyltetrahydrofolate + NADPH. The enzyme catalyses (6R)-5,10-methenyltetrahydrofolate + H2O = (6R)-10-formyltetrahydrofolate + H(+). Its pathway is one-carbon metabolism; tetrahydrofolate interconversion. Its function is as follows. Catalyzes the oxidation of 5,10-methylenetetrahydrofolate to 5,10-methenyltetrahydrofolate and then the hydrolysis of 5,10-methenyltetrahydrofolate to 10-formyltetrahydrofolate. This Amoebophilus asiaticus (strain 5a2) protein is Bifunctional protein FolD.